The primary structure comprises 229 residues: Adapter protein MecA (229 aa).

The protein belongs to the MecA family. Homodimer.

Functionally, enables the recognition and targeting of unfolded and aggregated proteins to the ClpC protease or to other proteins involved in proteolysis. The sequence is that of Adapter protein MecA from Latilactobacillus sakei subsp. sakei (strain 23K) (Lactobacillus sakei subsp. sakei).